The chain runs to 610 residues: MKLLPKILAHSIDHNQHIEESRQLLSYALIHPATSLEDRSALAMWLNHLEDRTSTSFGSQNRGRSDSVDYGQTHYYHQRQNSEDKLNGWQNSRDSGICISASNWQDKSLGCENGHVPLYSSSSVPATINTIGTSTSTILSGQAHHSPLKRSVSLTPPMNVPNQPLGHGWMSHEDLRARGPQCLPSDHAPLSPQSSVASSGSGGSEHLEDQTTARNTFQEEGSGMKDVPAWLKSLRLHKYAALFSQMTYEEMMALTECQLEAQNVTKGARHKIVISIQKLKERQNLLKSLERDIIEGGSLRIPLQELHQMILTPIKAYSSPSTTPEVRRREPLLMESPSPDCKDSAATVTSATASASAGASGGLQPPQLSSCDGELAVAPLPEGDLPGQFTRVMGKVCTQLLVSRPDEENISSYLQLLDKCLVHEAFTETQKKRLLSWKQQVQKLFRSFPRKTLLDISGYRQQRNRGFGQSNSLPTASSVGSGMGRRNPRQYQIASRNVPSARLGLLGTSGFVSSNQRHTAANPTIMKQGRQNLWFANPGGSNSVPSRTHSSVQKTRSLPVHTSPQNMLMFQQPEFQLPVTEPDINNRLESLCLSMTEHALGDGVDRTSTI.

At Ser67 the chain carries Phosphoserine. 3 disordered regions span residues 177-222 (ARGP…EEGS), 318-366 (SSPS…LQPP), and 464-487 (NRGF…GRRN). One can recognise an SAM domain in the interval 222–295 (SGMKDVPAWL…LKSLERDIIE (74 aa)). Ser319 carries the post-translational modification Phosphoserine. Phosphothreonine is present on Thr323. Over residues 344–358 (SAATVTSATASASAG) the composition is skewed to low complexity. The residue at position 465 (Arg465) is an Omega-N-methylarginine. Residues 467–480 (FGQSNSLPTASSVG) are compositionally biased toward polar residues. Ser472 carries the phosphoserine modification.

Belongs to the SMAUG family. In terms of tissue distribution, expressed in brain (at protein level).

The protein resides in the cytoplasm. It localises to the cell projection. Its subcellular location is the dendrite. It is found in the synapse. The protein localises to the synaptosome. Functionally, acts as a translational repressor of SRE-containing messengers. In Rattus norvegicus (Rat), this protein is Protein Smaug homolog 1 (Samd4a).